The sequence spans 228 residues: uncharacterized protein (228 aa).

Residues 1–16 (MILLLLALISATTAFQ) form the signal peptide. The helical transmembrane segment at 206–225 (LFQTLFFVTLSFLVGSAFAL) threads the bilayer.

It to A.fulgidus AF_1225.

The protein resides in the membrane. This is an uncharacterized protein from Archaeoglobus fulgidus (strain ATCC 49558 / DSM 4304 / JCM 9628 / NBRC 100126 / VC-16).